Consider the following 369-residue polypeptide: MICFDRLKKAFSNFLDKISGEENKKEPETRQTDQLESKKEETIQQQQNVQQPQAENKIEQKQEKISVQTGQENKQENKRSFFDFLKYKTIKEDDLNDVIEELRFQLLDSDVSYEVTEKILEDLKNNLIGKKVSRREEVEEIVINTLKKSITEILTKNQKTDLIEKIRSSGKKPFVIIFFGVNGVGKTTTIAKVVNMLKKNNLSTIIAASDTFRAAAQEQLAYHASKLEVQLIRGKYGADPASVAFDAISFAKSRNIDVVLIDTAGRMHIDSDLVEELKRVLRIAKPDFRILILDSLAGSDALEQARHFENNVGYDAVILTKVDADAKGGIALSLAYELKKPVVYMGVGQNYDDLIPFSPDWFVERIFSS.

The span at 20 to 42 (GEENKKEPETRQTDQLESKKEET) shows a compositional bias: basic and acidic residues. A disordered region spans residues 20 to 58 (GEENKKEPETRQTDQLESKKEETIQQQQNVQQPQAENKI). Low complexity predominate over residues 44 to 53 (QQQQNVQQPQ). Residues 180–187 (GVNGVGKT), 262–266 (DTAGR), and 320–323 (TKVD) contribute to the GTP site.

This sequence belongs to the GTP-binding SRP family. FtsY subfamily. As to quaternary structure, part of the signal recognition particle protein translocation system, which is composed of SRP and FtsY.

It is found in the cell membrane. The protein resides in the cytoplasm. The catalysed reaction is GTP + H2O = GDP + phosphate + H(+). Involved in targeting and insertion of nascent membrane proteins into the cytoplasmic membrane. Acts as a receptor for the complex formed by the signal recognition particle (SRP) and the ribosome-nascent chain (RNC). This chain is Signal recognition particle receptor FtsY, found in Sulfolobus acidocaldarius (strain ATCC 33909 / DSM 639 / JCM 8929 / NBRC 15157 / NCIMB 11770).